A 299-amino-acid polypeptide reads, in one-letter code: MWFKNLKIYRLSAPWALNGDQLEECLARFAYQGGNNLEMQSLGWISPRENGLLAHTLNGQILLTLRAEKKLLPTTVVNQVAKARAQEIEEQQGYKPGRKQMKEIKERVTDELLPKAFSIYRDTRVWIDTVNHWLVIDAAASAKADEVIGLLVKTIDPLPLDNLYVEQSPAAAMTGWLAADEAPANFSIDQDTELRASGESRAAIRYVKHSIDVDDVRRHIQSGKQCTRLAMTWADRVSFVLTESLDVKRVAPLDVLKENPDAATQNDDEKFDSDMTLMTGEVAKLLAELVDSLGGEKRV.

It belongs to the RdgC family.

It localises to the cytoplasm. It is found in the nucleoid. In terms of biological role, may be involved in recombination. This Bordetella bronchiseptica (strain ATCC BAA-588 / NCTC 13252 / RB50) (Alcaligenes bronchisepticus) protein is Recombination-associated protein RdgC.